The sequence spans 1222 residues: BOS complex subunit NOMO1 (1222 aa).

Residues 1–31 form the signal peptide; the sequence is MLVGQGAGPLGPAVVTAAVVLLLSGVGPAHG. The Extracellular portion of the chain corresponds to 32–1155; that stretch reads SEDIVVGCGG…NPTRKLPEQD (1124 aa). Residues asparagine 50, asparagine 218, and asparagine 618 are each glycosylated (N-linked (GlcNAc...) asparagine). Residues 1156-1176 form a helical membrane-spanning segment; sequence IAQGSYIALPLTLLVLLAGYN. Residues 1177-1222 lie on the Cytoplasmic side of the membrane; the sequence is HDKLIPLLLQLTSRLQGVRALGQAASDNSGPEDAKRQAKKQKTRRT. Residues 1198-1222 form a disordered region; the sequence is GQAASDNSGPEDAKRQAKKQKTRRT. Serine 1205 carries the post-translational modification Phosphoserine. Positions 1213 to 1222 are enriched in basic residues; sequence QAKKQKTRRT.

Component of the back of Sec61 (BOS) complex, composed of NCLN/Nicalin, NOMO (NOMO1, NOMO2 or NOMO3) and TMEM147. The BOS complex is part of the multi-pass translocon (MPT) complex, composed of three subcomplexes, the GEL complex (composed of RAB5IF/OPTI and TMCO1), the BOS complex (composed of NCLN/Nicalin, NOMO and TMEM147) and the PAT complex (composed of WDR83OS/Asterix and CCDC47). The MPT complex associates with the SEC61 complex. Due to the strong similarity between NOMO1, NOMO2 and NOMO3, similar interaction pattern probably occur for the three gene copies. Expressed in colon tumor tissue and in adjacent normal colonic mucosa.

The protein localises to the endoplasmic reticulum membrane. Functionally, component of the multi-pass translocon (MPT) complex that mediates insertion of multi-pass membrane proteins into the lipid bilayer of membranes. The MPT complex takes over after the SEC61 complex: following membrane insertion of the first few transmembrane segments of proteins by the SEC61 complex, the MPT complex occludes the lateral gate of the SEC61 complex to promote insertion of subsequent transmembrane regions. The polypeptide is BOS complex subunit NOMO1 (NOMO1) (Homo sapiens (Human)).